The sequence spans 22 residues: Conantokin-Oc (22 aa).

The disordered stretch occupies residues 1 to 22 (GEEERKAMAELEAKKAQEALKA). E3, E4, E10, and E18 each carry 4-carboxyglutamate.

Expressed by the venom duct.

Its subcellular location is the secreted. In terms of biological role, conantokins inhibit N-methyl-D-aspartate (NMDA) receptors. The protein is Conantokin-Oc of Conus ochroleucus (Perfect cone).